Consider the following 398-residue polypeptide: Small ribosomal subunit protein mS78 (rPPR3a) (398 aa).

Residues 1-19 constitute a mitochondrion transit peptide; it reads MSSLSRVLRGTFNTCPIRR. PPR repeat units follow at residues 108–142, 143–173, 179–213, 214–248, 249–283, 284–318, and 319–353; these read KEGFAARIISLYGKAGMFENAQKVFEEMPNRDCKR, SVLSFNALLSAYRLSKKFDVVEELFNELPGK, DIVSYNTLIKALCEKDSLPEAVALLDEIENKGLKP, DIVTFNTLLLSSYLKGQFELGEEIWAKMVEKNVAI, DIRTYNARLLGLANEAKSKELVNLFGELKASGLKP, DVFSFNAMIRGSINEGKMDEAEAWYKEIVKHGYRP, and DKATFALLLPAMCKAGDFESAIELFKETFSKRYLV.

Belongs to the PPR family. P subfamily. As to quaternary structure, component of the mitochondrial ribosome small subunit.

The protein localises to the mitochondrion. This is Small ribosomal subunit protein mS78 (rPPR3a) from Arabidopsis thaliana (Mouse-ear cress).